Consider the following 998-residue polypeptide: UPF0182 protein AAur_2732 (998 aa).

The next 7 membrane-spanning stretches (helical) occupy residues glycine 18–alanine 38, isoleucine 64–isoleucine 84, valine 115–glutamine 135, phenylalanine 168–isoleucine 188, glutamine 211–leucine 231, alanine 260–glycine 280, and isoleucine 287–isoleucine 307. Disordered regions lie at residues glycine 490–glycine 518, leucine 888–alanine 923, and glutamine 971–serine 998. Residues proline 496 to glycine 509 are compositionally biased toward basic and acidic residues. Residues threonine 908–glycine 919 show a composition bias toward pro residues. Residues alanine 976–alanine 990 are compositionally biased toward low complexity.

It belongs to the UPF0182 family.

It localises to the cell membrane. This Paenarthrobacter aurescens (strain TC1) protein is UPF0182 protein AAur_2732.